The following is a 207-amino-acid chain: 2,3-bisphosphoglycerate-dependent phosphoglycerate mutase (207 aa).

Residues 10–17 (RHGQSEWN), 23–24 (TG), Arg-62, 89–92 (ERDY), Lys-100, 116–117 (RR), and 160–161 (GN) contribute to the substrate site. His-11 acts as the Tele-phosphohistidine intermediate in catalysis. The active-site Proton donor/acceptor is the Glu-89.

This sequence belongs to the phosphoglycerate mutase family. BPG-dependent PGAM subfamily. In terms of assembly, homodimer.

It catalyses the reaction (2R)-2-phosphoglycerate = (2R)-3-phosphoglycerate. It participates in carbohydrate degradation; glycolysis; pyruvate from D-glyceraldehyde 3-phosphate: step 3/5. In terms of biological role, catalyzes the interconversion of 2-phosphoglycerate and 3-phosphoglycerate. The chain is 2,3-bisphosphoglycerate-dependent phosphoglycerate mutase from Bradyrhizobium diazoefficiens (strain JCM 10833 / BCRC 13528 / IAM 13628 / NBRC 14792 / USDA 110).